A 724-amino-acid chain; its full sequence is Coiled-coil domain-containing protein 175 (724 aa).

5 coiled-coil regions span residues 131–164 (VEMS…NTAL), 203–256 (INLE…RKET), 282–373 (VVLS…RQYK), 426–534 (ELHR…ERKL), and 565–627 (QLQV…QLRE).

The protein is Coiled-coil domain-containing protein 175 (CCDC175) of Bos taurus (Bovine).